The chain runs to 594 residues: Protein TRANSPORT INHIBITOR RESPONSE 1 (594 aa).

Residues 3–50 (KRIALSFPEEVLEHVFSFIQLDKDRNSVSLVCKSWYEIERWCRRKVFI) enclose the F-box domain. Lysine 74 is a 1D-myo-inositol hexakisphosphate binding site. Residues 81–82 (DF) are interaction with auxin-responsive proteins. Residues 113–114 (KR) and arginine 344 each bind 1D-myo-inositol hexakisphosphate. The interval 347 to 352 (PSEPFV) is interaction with auxin-responsive proteins. 401–403 (RFR) is a 1D-myo-inositol hexakisphosphate binding site. (indol-3-yl)acetate is bound at residue arginine 403. The interval 405-409 (CIIEP) is interaction with auxin-responsive proteins. Arginine 436 serves as a coordination point for 1D-myo-inositol hexakisphosphate. 438–439 (SL) is a binding site for (indol-3-yl)acetate. The interval 464 to 465 (AF) is interaction with auxin-responsive proteins. 1D-myo-inositol hexakisphosphate is bound by residues 484-485 (RK) and arginine 509.

Interacts with auxin. Part of a SCF E3 ubiquitin ligase complex SCF(TIR1) composed of SKP1, CUL1, RBX1 and TIR1. SCF(TIR1) interacts with the COP9 signalosome (CSN) complex. Interacts with Aux/IAA proteins (IAA3, IAA7, IAA12 and IAA17) in an auxin-dependent manner. The interaction with IAA3, a negative regulator of auxin responses, is promoted by auxin, but repressed by juglon (5-hydroxy-1,4-naphthoquinone). Interactions with auxin-responsive proteins is inactivated by auxin antagonists. In terms of tissue distribution, expressed in roots, stems, leaves and flowers. In adult plants, mostly expressed in floral stigma, anther filaments, abscission zones and vascular tissues.

The protein localises to the nucleus. The protein operates within protein modification; protein ubiquitination. Auxin receptor that mediates Aux/IAA proteins proteasomal degradation and auxin-regulated transcription. The SCF(TIR1) E3 ubiquitin ligase complex is involved in auxin-mediated signaling pathway that regulate root and hypocotyl growth, lateral root formation, cell elongation, and gravitropism. Appears to allow pericycle cells to overcome G2 arrest prior to lateral root development. Plays a role in ethylene signaling in roots. Confers sensitivity to the virulent bacterial pathogen P.syringae. The protein is Protein TRANSPORT INHIBITOR RESPONSE 1 (TIR1) of Arabidopsis thaliana (Mouse-ear cress).